The following is a 142-amino-acid chain: Large ribosomal subunit protein uL13 (142 aa).

Belongs to the universal ribosomal protein uL13 family. Part of the 50S ribosomal subunit.

This protein is one of the early assembly proteins of the 50S ribosomal subunit, although it is not seen to bind rRNA by itself. It is important during the early stages of 50S assembly. This chain is Large ribosomal subunit protein uL13, found in Pectobacterium carotovorum subsp. carotovorum (strain PC1).